A 575-amino-acid chain; its full sequence is Sorting nexin-41 (575 aa).

The segment at 30 to 66 (TDGPDDYDFTEPSINGSSDENAQSNAVAEPIEETDEP) is disordered. Positions 41–55 (PSINGSSDENAQSNA) are enriched in polar residues. The PX domain occupies 101–221 (QGKNPEVIRI…QKFLNPEYFW (121 aa)). 4 residues coordinate a 1,2-diacyl-sn-glycero-3-phospho-(1D-myo-inositol-3-phosphate): arginine 139, serine 141, lysine 165, and arginine 188. Residues 467 to 486 (FRSSASPNNKSGSDSISSEV) are disordered. A compositionally biased stretch (polar residues) spans 469–484 (SSASPNNKSGSDSISS).

This sequence belongs to the sorting nexin family.

The protein resides in the endosome membrane. The protein localises to the endomembrane system. Its function is as follows. May be required for cytoplasm to vacuole transport (Cvt) and pexophagy. In Kluyveromyces lactis (strain ATCC 8585 / CBS 2359 / DSM 70799 / NBRC 1267 / NRRL Y-1140 / WM37) (Yeast), this protein is Sorting nexin-41 (SNX41).